A 414-amino-acid polypeptide reads, in one-letter code: Patatin-like protein 1 (414 aa).

In terms of domain architecture, PNPLA spans 22–228; that stretch reads LSLDGGGVRG…TANNPTLVAM (207 aa). A GXGXXG motif is present at residues 26 to 31; sequence GGGVRG. A GXSXG motif is present at residues 64-68; it reads GTSTG. The Nucleophile role is filled by Ser-66. The active-site Proton acceptor is Asp-215. A DGA/G motif is present at residues 215–217; the sequence is DGA. Ser-399 is subject to Phosphoserine.

The protein belongs to the patatin family. Phosphorylated at Ser-399 by CPK3. Phosphorylation enhances PLP1 activity towards phosphatidylcholine. As to expression, expressed specifically in roots and root hairs.

Its subcellular location is the cytoplasm. In terms of biological role, possesses non-specific lipolytic acyl hydrolase (LAH) activity. Catalyzes the hydrolysis of the neutral lipids monogalactosyldiacylglycerol (MGDG), digalactosyldiacylglycerol (DGDG) and phosphatidylglycerol (PG), and less efficiently the polar lipids phosphatidylcholine (PC) and phosphatidylinositol (PI), but not the storage lipid triacylglycerol (TAG). May play a role in root development. This Arabidopsis thaliana (Mouse-ear cress) protein is Patatin-like protein 1 (PLP1).